The sequence spans 888 residues: Patched domain-containing protein 1 (888 aa).

Residues 20–40 (FIASHPVFFASAPVLISILLG) traverse the membrane as a helical segment. Residues asparagine 77, asparagine 133, and asparagine 167 are each glycosylated (N-linked (GlcNAc...) asparagine). Positions 268-427 (SERYLVTSLI…LSFYGSSLVF (160 aa)) constitute an SSD domain. 2 helical membrane passes run 273–293 (VTSLILVVTMAILCCSMQDCV) and 298–318 (WLGLLGLVTISLATLTAAGII). N-linked (GlcNAc...) asparagine glycans are attached at residues asparagine 319 and asparagine 326. The next 4 helical transmembrane spans lie at 328–348 (TFLGVPFVMLGHGLYGTFEML), 373–393 (LSFSLTTAMYLVTFGIGASPF), 407–427 (CIAILFNYLYVLSFYGSSLVF), and 502–522 (PFVVLFYLIYISFALMGYLQV). 3 N-linked (GlcNAc...) asparagine glycosylation sites follow: asparagine 568, asparagine 599, and asparagine 608. Transmembrane regions (helical) follow at residues 707–727 (ALFLLFFSAFLVADSLINVWI) and 738–758 (VIGFMTLWKVELDCISVLCLI). Asparagine 762 carries N-linked (GlcNAc...) asparagine glycosylation. Residues 795 to 815 (GVAILQSYLCYIVGLFPLAAV) form a helical membrane-spanning segment. The N-linked (GlcNAc...) asparagine glycan is linked to asparagine 818. A helical membrane pass occupies residues 826-846 (CLFLIAFVTFFHCFAILPVIL).

Belongs to the patched family. Broadly expressed in the brain. Selectively expressed in the thalamic reticular nucleus (TRN) in early development and continues to be enriched in this structure throughout adult life.

The protein localises to the cell membrane. It localises to the cell projection. Its subcellular location is the dendritic spine. Required for the development and function of the thalamic reticular nucleus (TRN), a part of the thalamus that is critical for thalamocortical transmission, generation of sleep rhythms, sensorimotor processing and attention. Can bind cholesterol in vitro. This chain is Patched domain-containing protein 1, found in Mus musculus (Mouse).